The sequence spans 219 residues: tRNA (guanine-N(7)-)-methyltransferase (219 aa).

S-adenosyl-L-methionine-binding residues include E44, D69, E102, and N125. Positions 129 and 161 each coordinate substrate.

This sequence belongs to the class I-like SAM-binding methyltransferase superfamily. TrmB family.

It carries out the reaction guanosine(46) in tRNA + S-adenosyl-L-methionine = N(7)-methylguanosine(46) in tRNA + S-adenosyl-L-homocysteine. It participates in tRNA modification; N(7)-methylguanine-tRNA biosynthesis. Its function is as follows. Catalyzes the formation of N(7)-methylguanine at position 46 (m7G46) in tRNA. The protein is tRNA (guanine-N(7)-)-methyltransferase of Clostridium perfringens (strain 13 / Type A).